Consider the following 37-residue polypeptide: Large ribosomal subunit protein bL36 (37 aa).

This sequence belongs to the bacterial ribosomal protein bL36 family.

The chain is Large ribosomal subunit protein bL36 from Janthinobacterium sp. (strain Marseille) (Minibacterium massiliensis).